The primary structure comprises 923 residues: Isoleucine--tRNA ligase (923 aa).

The 'HIGH' region signature appears at P57 to T67. E561 lines the L-isoleucyl-5'-AMP pocket. Residues A602–S606 carry the 'KMSKS' region motif. K605 contributes to the ATP binding site. Zn(2+)-binding residues include C895, C898, C915, and C918.

Belongs to the class-I aminoacyl-tRNA synthetase family. IleS type 1 subfamily. In terms of assembly, monomer. Zn(2+) serves as cofactor.

Its subcellular location is the cytoplasm. The catalysed reaction is tRNA(Ile) + L-isoleucine + ATP = L-isoleucyl-tRNA(Ile) + AMP + diphosphate. In terms of biological role, catalyzes the attachment of isoleucine to tRNA(Ile). As IleRS can inadvertently accommodate and process structurally similar amino acids such as valine, to avoid such errors it has two additional distinct tRNA(Ile)-dependent editing activities. One activity is designated as 'pretransfer' editing and involves the hydrolysis of activated Val-AMP. The other activity is designated 'posttransfer' editing and involves deacylation of mischarged Val-tRNA(Ile). The sequence is that of Isoleucine--tRNA ligase from Brachyspira hyodysenteriae (strain ATCC 49526 / WA1).